We begin with the raw amino-acid sequence, 350 residues long: Protein XRP2 (350 aa).

Over residues 1–10 (MGCFFSKRRK) the composition is skewed to basic residues. Residues 1–31 (MGCFFSKRRKADKESRPENEEERPKQYSWDQ) form a disordered region. Residue Gly2 is the site of N-myristoyl glycine attachment. Cys3 is lipidated: S-palmitoyl cysteine. Positions 11–31 (ADKESRPENEEERPKQYSWDQ) are enriched in basic and acidic residues. The 156-residue stretch at 24–179 (PKQYSWDQRE…TWSNIHDFTP (156 aa)) folds into the C-CAP/cofactor C-like domain. GTP contacts are provided by residues 98–99 (GS) and 115–118 (QQFR).

Belongs to the TBCC family. In terms of assembly, found in a complex with ARL3, RP2 and UNC119 (or UNC119B); RP2 induces hydrolysis of GTP ARL3 in the complex, leading to the release of UNC119 (or UNC119B). Interacts with ARL3; interaction is direct and stimulated with the activated GTP-bound form of ARL3. Myristoylated on Gly-2; which may be required for membrane targeting. Post-translationally, palmitoylated on Cys-3; which may be required for plasma membrane targeting. Mutation of Cys-3 targets the protein to internal membranes. As to expression, ubiquitous. Expressed in the rod and cone photoreceptors, extending from the tips of the outer segment (OS) through the inner segment (IS) and outer nuclear layer (ONL) and into the synaptic terminals of the outer plexiform layer (ONL). Also detected in the bipolar, horizontal and amacrine cells in the inner nuclear layer (INL), extending to the inner plexiform layer (IPL) and though the ganglion cell layer (GCL) and into the nerve fiber layer (NFL) (at protein level).

It is found in the cell membrane. It localises to the cell projection. Its subcellular location is the cilium. Functionally, acts as a GTPase-activating protein (GAP) involved in trafficking between the Golgi and the ciliary membrane. Involved in localization of proteins, such as NPHP3, to the cilium membrane by inducing hydrolysis of GTP ARL3, leading to the release of UNC119 (or UNC119B). Acts as a GTPase-activating protein (GAP) for tubulin in concert with tubulin-specific chaperone C, but does not enhance tubulin heterodimerization. Acts as a guanine nucleotide dissociation inhibitor towards ADP-ribosylation factor-like proteins. The protein is Protein XRP2 (RP2) of Homo sapiens (Human).